The primary structure comprises 288 residues: Bifunctional protein FolD (288 aa).

NADP(+) contacts are provided by residues 166–168 (GRS), serine 191, and isoleucine 232.

The protein belongs to the tetrahydrofolate dehydrogenase/cyclohydrolase family. In terms of assembly, homodimer.

The catalysed reaction is (6R)-5,10-methylene-5,6,7,8-tetrahydrofolate + NADP(+) = (6R)-5,10-methenyltetrahydrofolate + NADPH. It catalyses the reaction (6R)-5,10-methenyltetrahydrofolate + H2O = (6R)-10-formyltetrahydrofolate + H(+). It participates in one-carbon metabolism; tetrahydrofolate interconversion. Catalyzes the oxidation of 5,10-methylenetetrahydrofolate to 5,10-methenyltetrahydrofolate and then the hydrolysis of 5,10-methenyltetrahydrofolate to 10-formyltetrahydrofolate. The polypeptide is Bifunctional protein FolD (Rickettsia rickettsii (strain Iowa)).